Here is a 391-residue protein sequence, read N- to C-terminus: 8-amino-7-oxononanoate synthase (391 aa).

Arg20 provides a ligand contact to substrate. 106–107 (GY) serves as a coordination point for pyridoxal 5'-phosphate. His131 provides a ligand contact to substrate. Residues Ser178, His206, and Thr234 each contribute to the pyridoxal 5'-phosphate site. Residue Lys237 is modified to N6-(pyridoxal phosphate)lysine. Thr353 provides a ligand contact to substrate.

It belongs to the class-II pyridoxal-phosphate-dependent aminotransferase family. BioF subfamily. As to quaternary structure, homodimer. Requires pyridoxal 5'-phosphate as cofactor.

The catalysed reaction is 6-carboxyhexanoyl-[ACP] + L-alanine + H(+) = (8S)-8-amino-7-oxononanoate + holo-[ACP] + CO2. Its pathway is cofactor biosynthesis; biotin biosynthesis. Functionally, catalyzes the decarboxylative condensation of pimeloyl-[acyl-carrier protein] and L-alanine to produce 8-amino-7-oxononanoate (AON), [acyl-carrier protein], and carbon dioxide. This Trichlorobacter lovleyi (strain ATCC BAA-1151 / DSM 17278 / SZ) (Geobacter lovleyi) protein is 8-amino-7-oxononanoate synthase.